The sequence spans 92 residues: Large ribosomal subunit protein bL28 (92 aa).

The protein belongs to the bacterial ribosomal protein bL28 family.

This is Large ribosomal subunit protein bL28 from Borrelia duttonii (strain Ly).